The chain runs to 470 residues: 3-isopropylmalate dehydratase large subunit (470 aa).

Positions 347, 407, and 410 each coordinate [4Fe-4S] cluster.

It belongs to the aconitase/IPM isomerase family. LeuC type 1 subfamily. Heterodimer of LeuC and LeuD. [4Fe-4S] cluster is required as a cofactor.

It carries out the reaction (2R,3S)-3-isopropylmalate = (2S)-2-isopropylmalate. Its pathway is amino-acid biosynthesis; L-leucine biosynthesis; L-leucine from 3-methyl-2-oxobutanoate: step 2/4. In terms of biological role, catalyzes the isomerization between 2-isopropylmalate and 3-isopropylmalate, via the formation of 2-isopropylmaleate. The chain is 3-isopropylmalate dehydratase large subunit from Shewanella amazonensis (strain ATCC BAA-1098 / SB2B).